The following is a 177-amino-acid chain: Large ribosomal subunit protein uL6 (177 aa).

It belongs to the universal ribosomal protein uL6 family. In terms of assembly, part of the 50S ribosomal subunit.

Functionally, this protein binds to the 23S rRNA, and is important in its secondary structure. It is located near the subunit interface in the base of the L7/L12 stalk, and near the tRNA binding site of the peptidyltransferase center. This Salmonella dublin (strain CT_02021853) protein is Large ribosomal subunit protein uL6.